We begin with the raw amino-acid sequence, 332 residues long: Tetraacyldisaccharide 4'-kinase (332 aa).

60–67 is a binding site for ATP; it reads TVGGTGKT.

This sequence belongs to the LpxK family.

The enzyme catalyses a lipid A disaccharide + ATP = a lipid IVA + ADP + H(+). It participates in glycolipid biosynthesis; lipid IV(A) biosynthesis; lipid IV(A) from (3R)-3-hydroxytetradecanoyl-[acyl-carrier-protein] and UDP-N-acetyl-alpha-D-glucosamine: step 6/6. Transfers the gamma-phosphate of ATP to the 4'-position of a tetraacyldisaccharide 1-phosphate intermediate (termed DS-1-P) to form tetraacyldisaccharide 1,4'-bis-phosphate (lipid IVA). This is Tetraacyldisaccharide 4'-kinase from Pseudomonas aeruginosa (strain LESB58).